We begin with the raw amino-acid sequence, 255 residues long: Hemin import ATP-binding protein HmuV (255 aa).

Residues 2–238 (LRAHNLHIRR…ESLKAVFGLE (237 aa)) enclose the ABC transporter domain. 34–41 (GPNGAGKS) contacts ATP.

The protein belongs to the ABC transporter superfamily. Heme (hemin) importer (TC 3.A.1.14.5) family. In terms of assembly, the complex is composed of two ATP-binding proteins (HmuV), two transmembrane proteins (HmuU) and a solute-binding protein (HmuT).

Its subcellular location is the cell inner membrane. Its function is as follows. Part of the ABC transporter complex HmuTUV involved in hemin import. Responsible for energy coupling to the transport system. In Pseudomonas fluorescens (strain Pf0-1), this protein is Hemin import ATP-binding protein HmuV.